A 195-amino-acid polypeptide reads, in one-letter code: Fe/S biogenesis protein NfuA (195 aa).

[4Fe-4S] cluster contacts are provided by cysteine 152 and cysteine 155.

The protein belongs to the NfuA family. Homodimer. [4Fe-4S] cluster is required as a cofactor.

Functionally, involved in iron-sulfur cluster biogenesis. Binds a 4Fe-4S cluster, can transfer this cluster to apoproteins, and thereby intervenes in the maturation of Fe/S proteins. Could also act as a scaffold/chaperone for damaged Fe/S proteins. In Vibrio cholerae serotype O1 (strain ATCC 39315 / El Tor Inaba N16961), this protein is Fe/S biogenesis protein NfuA.